Here is a 303-residue protein sequence, read N- to C-terminus: Probable alpha-L-glutamate ligase 1 (303 aa).

The ATP-grasp domain occupies 104–287 (LQLLSRKGVG…IAGLIYSFIE (184 aa)). Residues Lys-141, 178–179 (EF), Asp-187, and 211–213 (RSN) each bind ATP. Mg(2+) is bound by residues Asp-248, Glu-260, and Asn-262. Mn(2+)-binding residues include Asp-248, Glu-260, and Asn-262.

This sequence belongs to the RimK family. Mg(2+) serves as cofactor. Mn(2+) is required as a cofactor.

In Hahella chejuensis (strain KCTC 2396), this protein is Probable alpha-L-glutamate ligase 1.